A 270-amino-acid chain; its full sequence is Gap junction beta-3 protein (270 aa).

Residues 1-20 (MDWKKLQDLLSGVNQYSTAF) are Cytoplasmic-facing. A helical transmembrane segment spans residues 21–40 (GRIWLSVVFVFRVLVYVVAA). Residues 41–75 (ERVWGDEQKDFDCNTRQPGCTNVCYDNFFPISNIR) lie on the Extracellular side of the membrane. A helical transmembrane segment spans residues 76–98 (LWALQLIFVTCPSMLVILHVAYR). The Cytoplasmic portion of the chain corresponds to 99–126 (EERERKHRQKHGEHCAKLYSHPGKKHGG). A helical membrane pass occupies residues 127–149 (LWWTYLFSLIFKLIIELVFLYVL). Over 150–188 (HTLWHGFTMPRLVQCASVVPCPNTVDCYIARPTEKKVFT) the chain is Extracellular. The helical transmembrane segment at 189–211 (YFMVGASAVCIILTICEICYLIF) threads the bilayer. Topologically, residues 212 to 270 (HRIMRGLSKDKSTKSISSPKSSSRASTCRCHHKLLESGDLEAVPADDKLQASAPSLTPI) are cytoplasmic.

This sequence belongs to the connexin family. Beta-type (group I) subfamily. A connexon is composed of a hexamer of connexins. Interacts with CNST.

The protein localises to the cell membrane. The protein resides in the cell junction. It localises to the gap junction. In terms of biological role, one gap junction consists of a cluster of closely packed pairs of transmembrane channels, the connexons, through which materials of low MW diffuse from one cell to a neighboring cell. This is Gap junction beta-3 protein (Gjb3) from Rattus norvegicus (Rat).